A 718-amino-acid polypeptide reads, in one-letter code: Probable GTP diphosphokinase RSH2, chloroplastic (718 aa).

The N-terminal 68 residues, 1–68, are a transit peptide targeting the chloroplast; sequence MSVPAIAVYT…LFSSPTAAPR (68 aa). The interval 9–48 is disordered; the sequence is YTSPPGAVYTSSSSSELEASSRGSAPCATAAPPSPASSHR. The span at 19 to 39 shows a compositional bias: low complexity; the sequence is SSSSSELEASSRGSAPCATAA. The HD domain maps to 243–347; sequence YLQHCVETAV…IKLADRLHNM (105 aa).

This sequence belongs to the RelA/SpoT family.

It is found in the plastid. The protein resides in the chloroplast. It catalyses the reaction GTP + ATP = guanosine 3'-diphosphate 5'-triphosphate + AMP. Functionally, probable ppGpp (guanosine 3'-diphosphate 5'-diphosphate) synthetase that may be involved in a rapid plant ppGpp-mediated response to pathogens and other stresses. The sequence is that of Probable GTP diphosphokinase RSH2, chloroplastic (RSH2) from Oryza sativa subsp. japonica (Rice).